The following is a 249-amino-acid chain: 2,3-bisphosphoglycerate-dependent phosphoglycerate mutase (249 aa).

Substrate-binding positions include 9–16, 22–23, Arg-61, 88–91, Lys-99, 115–116, and 184–185; these read RHGQSQWN, TG, ERHY, RR, and GN. The active-site Tele-phosphohistidine intermediate is the His-10. Glu-88 (proton donor/acceptor) is an active-site residue.

This sequence belongs to the phosphoglycerate mutase family. BPG-dependent PGAM subfamily. In terms of assembly, homodimer.

It carries out the reaction (2R)-2-phosphoglycerate = (2R)-3-phosphoglycerate. It participates in carbohydrate degradation; glycolysis; pyruvate from D-glyceraldehyde 3-phosphate: step 3/5. Its function is as follows. Catalyzes the interconversion of 2-phosphoglycerate and 3-phosphoglycerate. The sequence is that of 2,3-bisphosphoglycerate-dependent phosphoglycerate mutase from Xanthomonas campestris pv. campestris (strain 8004).